Reading from the N-terminus, the 633-residue chain is Polypeptide N-acetylgalactosaminyltransferase 3 (633 aa).

The Cytoplasmic segment spans residues 1–19; it reads MAHLKRLVKLHIKRHYHRK. The helical; Signal-anchor for type II membrane protein transmembrane segment at 20 to 37 threads the bilayer; the sequence is FWKLGAVIFFFLVVLILM. Residues 38–633 are Lumenal-facing; it reads QREVSVQYSK…LQKWIFSQND (596 aa). Residues 112–145 are disordered; it reads DRPPQDSNAPGASGKPFKITHLSPEEQKEKERGE. Residues 134 to 145 are compositionally biased toward basic and acidic residues; it reads SPEEQKEKERGE. The tract at residues 184-293 is catalytic subdomain A; the sequence is LPTTSVIIVF…YGWLEPLLAR (110 aa). The Mn(2+) site is built by Asp-277 and His-279. N-linked (GlcNAc...) asparagine glycosylation occurs at Asn-297. Positions 356–418 are catalytic subdomain B; it reads PIKTPTFAGG…PCSVVGHVFR (63 aa). Residue His-415 participates in Mn(2+) binding. Residue Asn-484 is glycosylated (N-linked (GlcNAc...) asparagine). The Ricin B-type lectin domain maps to 504-630; it reads VISGYIKSVG…TDLLQKWIFS (127 aa). Cysteines 517 and 535 form a disulfide. Residues Asp-519, Glu-522, His-536, and Asn-541 each contribute to the UDP-N-acetyl-alpha-D-galactosamine site. 2 cysteine pairs are disulfide-bonded: Cys-561/Cys-574 and Cys-605/Cys-618.

Belongs to the glycosyltransferase 2 family. GalNAc-T subfamily. It depends on Mn(2+) as a cofactor. Highly expressed in the reproductive tract, principally in the testis and uterus, and to a lesser degree in the cervix with only trace levels in the ovary. Also expressed at high level in sublingual gland, stomach and colon, with more moderate amounts present in the submandibular and parotid gland as well as the kidney.

It localises to the golgi apparatus. It is found in the golgi stack membrane. It catalyses the reaction L-seryl-[protein] + UDP-N-acetyl-alpha-D-galactosamine = a 3-O-[N-acetyl-alpha-D-galactosaminyl]-L-seryl-[protein] + UDP + H(+). It carries out the reaction L-threonyl-[protein] + UDP-N-acetyl-alpha-D-galactosamine = a 3-O-[N-acetyl-alpha-D-galactosaminyl]-L-threonyl-[protein] + UDP + H(+). It participates in protein modification; protein glycosylation. In terms of biological role, catalyzes the initial reaction in O-linked oligosaccharide biosynthesis, the transfer of an N-acetyl-D-galactosamine residue to a serine or threonine residue on the protein receptor. Has activity toward HIV envelope glycoprotein gp120. Has activity towards EA2, MUC2 and MUC5. Probably glycosylates fibronectin in vivo. Glycosylates FGF23. The chain is Polypeptide N-acetylgalactosaminyltransferase 3 (Galnt3) from Mus musculus (Mouse).